Consider the following 472-residue polypeptide: uncharacterized protein (472 aa).

Belongs to the IIV-6 198R family.

This is an uncharacterized protein from Acheta domesticus (House cricket).